Here is a 285-residue protein sequence, read N- to C-terminus: uncharacterized protein (285 aa).

7 consecutive transmembrane segments (helical) span residues 6 to 26 (YLVVILTVAGVLVILGFTPLI), 38 to 58 (VFAAILFLYVFFGRQIIYIFP), 84 to 104 (IFLLDLCPFFALIGPIFIFLR), 110 to 130 (GVLAIFGFYGAAITLFGELIF), 153 to 173 (FMMHFLSFLLSLAVFLWDDGF), 176 to 196 (ISFFYIHVFALAYLSYVALMV), and 236 to 256 (LIFGVSFGLSYFAIVLLTVLV).

The protein resides in the cell membrane. This is an uncharacterized protein from Mycoplasma pneumoniae (strain ATCC 29342 / M129 / Subtype 1) (Mycoplasmoides pneumoniae).